The sequence spans 225 residues: MOB-like protein phocein (225 aa).

Positions 92, 97, 110, 113, 119, 127, 169, and 174 each coordinate Zn(2+).

It belongs to the MOB1/phocein family. In terms of assembly, binds STRN4. Interacts with DNM1 and EPS15. Interacts with nucleoside diphosphate kinase. Interacts with CTTNBP2. Interacts with CTTNBP2NL. Part of the core of STRIPAK complexes composed of PP2A catalytic and scaffolding subunits, the striatins (PP2A regulatory subunits), the striatin-associated proteins MOB4, STRIP1 and STRIP2, PDCD10 and members of the STE20 kinases, such as STK24 and STK26. Phosphorylated on serine residues. In terms of tissue distribution, highly expressed in adrenal gland, spinal cord, brain and cerebellum. Detected at lower levels in heart and skeletal muscle, and at very low levels in spleen, liver and intestine.

The protein localises to the cytoplasm. It is found in the membrane. It localises to the golgi apparatus. The protein resides in the golgi stack membrane. Part of the striatin-interacting phosphatase and kinase (STRIPAK) complexes. STRIPAK complexes have critical roles in protein (de)phosphorylation and are regulators of multiple signaling pathways including Hippo, MAPK, nuclear receptor and cytoskeleton remodeling. Different types of STRIPAK complexes are involved in a variety of biological processes such as cell growth, differentiation, apoptosis, metabolism and immune regulation. This chain is MOB-like protein phocein (Mob4), found in Rattus norvegicus (Rat).